The sequence spans 251 residues: Ribonuclease 3 (251 aa).

One can recognise an RNase III domain in the interval 3–125 (LATLETRLGH…LFGAVFLDAG (123 aa)). Glutamate 38 provides a ligand contact to Mg(2+). The active site involves aspartate 42. Mg(2+) is bound by residues aspartate 111 and glutamate 114. Glutamate 114 is an active-site residue. The DRBM domain occupies 152 to 222 (DAKTLLQEFL…AKLALEAALV (71 aa)).

This sequence belongs to the ribonuclease III family. In terms of assembly, homodimer. Mg(2+) serves as cofactor.

The protein resides in the cytoplasm. It carries out the reaction Endonucleolytic cleavage to 5'-phosphomonoester.. In terms of biological role, digests double-stranded RNA. Involved in the processing of primary rRNA transcript to yield the immediate precursors to the large and small rRNAs (23S and 16S). Processes some mRNAs, and tRNAs when they are encoded in the rRNA operon. Processes pre-crRNA and tracrRNA of type II CRISPR loci if present in the organism. The sequence is that of Ribonuclease 3 from Bordetella avium (strain 197N).